Here is a 101-residue protein sequence, read N- to C-terminus: Small ribosomal subunit protein uS14 (101 aa).

The segment at 1-25 (MAKVSAIQKNKSRQKKSQRLHNKRS) is disordered. Residues 10–25 (NKSRQKKSQRLHNKRS) are compositionally biased toward basic residues.

The protein belongs to the universal ribosomal protein uS14 family. As to quaternary structure, part of the 30S ribosomal subunit. Contacts proteins S3 and S10.

Binds 16S rRNA, required for the assembly of 30S particles and may also be responsible for determining the conformation of the 16S rRNA at the A site. The sequence is that of Small ribosomal subunit protein uS14 from Rickettsia typhi (strain ATCC VR-144 / Wilmington).